The following is a 306-amino-acid chain: Mitochondrial 2-oxoglutarate/malate carrier protein (306 aa).

3 Solcar repeats span residues 7–95 (VPNV…LLER), 103–194 (LSFG…AKQA), and 203–292 (DGIF…MNAA). 6 helical membrane passes run 9–38 (NVVKFAFGGTAGMGATLVVQPLDLVKNRMQ), 72–93 (SAGLLRQATYTTTRLGTYAFLL), 108–122 (KAVLGMTAGGIGSFV), 172–192 (PTVLRAMVVNAAQLATYSQAK), 205–226 (IFCHFLASMISGLATTIASMPV), and 268–286 (FTPYYMRLGPHTVLTFIIL).

This sequence belongs to the mitochondrial carrier (TC 2.A.29) family. In terms of assembly, interacts with ant-1.1 and ced-9. Ubiquitously expressed, but highly expressed in the anterior pharynx.

It is found in the mitochondrion. Its subcellular location is the mitochondrion inner membrane. The enzyme catalyses (S)-malate(in) + 2-oxoglutarate(out) = (S)-malate(out) + 2-oxoglutarate(in). It carries out the reaction malonate(in) + 2-oxoglutarate(out) = malonate(out) + 2-oxoglutarate(in). It catalyses the reaction succinate(in) + 2-oxoglutarate(out) = succinate(out) + 2-oxoglutarate(in). The catalysed reaction is maleate(in) + 2-oxoglutarate(out) = maleate(out) + 2-oxoglutarate(in). The enzyme catalyses oxaloacetate(in) + 2-oxoglutarate(out) = oxaloacetate(out) + 2-oxoglutarate(in). In terms of biological role, catalyzes the transport of 2-oxoglutarate (alpha-oxoglutarate) across the inner mitochondrial membrane in an electroneutral exchange for malate. Can also exchange 2-oxoglutarate for other dicarboxylic acids such as malonate, succinate, maleate and oxaloacetate, although with lower affinity. Contributes to several metabolic processes, including the malate-aspartate shuttle, the oxoglutarate/isocitrate shuttle, in gluconeogenesis from lactate, and in nitrogen metabolism. Maintains mitochondrial fusion and fission events, and the organization and morphology of cristae. Regulator of apoptosis, insulin secretion and germline proliferation. Furthermore, plays a role in the oxidative stress response regulating endogenous levels of reactive oxygen species (ROS). Involved in the regulation of lin-35/Rb-mediated apoptosis in the germline. This Caenorhabditis elegans protein is Mitochondrial 2-oxoglutarate/malate carrier protein.